The primary structure comprises 544 residues: Probable protein kinase UbiB (544 aa).

The region spanning 123 to 504 (DFDENALASA…QRWQKKMFVL (382 aa)) is the Protein kinase domain. Residues 129–137 (LASASIAQV) and K155 contribute to the ATP site. The active-site Proton acceptor is the D290. 2 consecutive transmembrane segments (helical) span residues 501-521 (MFVL…FAAL) and 523-543 (LAIS…GFLL).

The protein belongs to the ABC1 family. UbiB subfamily.

It is found in the cell inner membrane. It functions in the pathway cofactor biosynthesis; ubiquinone biosynthesis [regulation]. In terms of biological role, is probably a protein kinase regulator of UbiI activity which is involved in aerobic coenzyme Q (ubiquinone) biosynthesis. The protein is Probable protein kinase UbiB of Histophilus somni (strain 129Pt) (Haemophilus somnus).